Consider the following 423-residue polypeptide: Histidine--tRNA ligase (423 aa).

Belongs to the class-II aminoacyl-tRNA synthetase family. As to quaternary structure, homodimer.

Its subcellular location is the cytoplasm. The enzyme catalyses tRNA(His) + L-histidine + ATP = L-histidyl-tRNA(His) + AMP + diphosphate + H(+). The chain is Histidine--tRNA ligase from Phytoplasma mali (strain AT).